Reading from the N-terminus, the 157-residue chain is DNA gyrase inhibitor (157 aa).

This sequence belongs to the DNA gyrase inhibitor family. In terms of assembly, interacts with DNA gyrase.

Its subcellular location is the cytoplasm. In terms of biological role, inhibits the supercoiling activity of DNA gyrase. Acts by inhibiting DNA gyrase at an early step, prior to (or at the step of) binding of DNA by the gyrase. It protects cells against toxins that target DNA gyrase, by inhibiting activity of these toxins and reducing the formation of lethal double-strand breaks in the cell. The chain is DNA gyrase inhibitor from Cronobacter turicensis (strain DSM 18703 / CCUG 55852 / LMG 23827 / z3032).